The chain runs to 374 residues: Chaperone protein DnaJ (374 aa).

Residues 6–70 form the J domain; the sequence is DYYDILGVSK…QKRAQYDQFG (65 aa). The segment at 135–217 adopts a CR-type zinc-finger fold; sequence GKKTTIKYSR…CGGTGHTSQQ (83 aa). Zn(2+) is bound by residues cysteine 148, cysteine 151, cysteine 165, cysteine 168, cysteine 191, cysteine 194, cysteine 205, and cysteine 208. CXXCXGXG motif repeat units follow at residues 148 to 155, 165 to 172, 191 to 198, and 205 to 212; these read CKTCGGSG, CHKCNGTG, CDVCNGTG, and CPTCGGTG. Disordered stretches follow at residues 308–328 and 347–374; these read GTNF…GTGD and EALK…KFMN.

The protein belongs to the DnaJ family. Homodimer. The cofactor is Zn(2+).

Its subcellular location is the cytoplasm. Functionally, participates actively in the response to hyperosmotic and heat shock by preventing the aggregation of stress-denatured proteins and by disaggregating proteins, also in an autonomous, DnaK-independent fashion. Unfolded proteins bind initially to DnaJ; upon interaction with the DnaJ-bound protein, DnaK hydrolyzes its bound ATP, resulting in the formation of a stable complex. GrpE releases ADP from DnaK; ATP binding to DnaK triggers the release of the substrate protein, thus completing the reaction cycle. Several rounds of ATP-dependent interactions between DnaJ, DnaK and GrpE are required for fully efficient folding. Also involved, together with DnaK and GrpE, in the DNA replication of plasmids through activation of initiation proteins. This chain is Chaperone protein DnaJ, found in Pediococcus pentosaceus (strain ATCC 25745 / CCUG 21536 / LMG 10740 / 183-1w).